The primary structure comprises 192 residues: Interleukin-18 (192 aa).

The propeptide occupies 1 to 35 (MAAMSEDSCVNFKEMMFIDNTLYFIPEENGDLESD).

The protein belongs to the IL-1 family. In terms of assembly, forms a ternary complex with ligand-binding receptor subunit IL18R1 and signaling receptor subunit IL18RAP at the plasma membrane. Mature IL18 first binds to IL18R1 forming a low affinity binary complex, which then interacts with IL18RAP to form a high affinity ternary complex that signals inside the cell. Interacts with cargo receptor TMED10; the interaction mediates the translocation from the cytoplasm into the ERGIC (endoplasmic reticulum-Golgi intermediate compartment) and thereby secretion. In terms of processing, the pro-IL-18 precursor is processed by CASP1 to yield its mature, active form. The pro-IL-18 precursor is however not processed by Casp4/Casp11 in rodents. The pro-IL-18 precursor features autoinhibitory interactions between the propeptide and the post-cleavage-site region, preventing recognition by the IL18R1 receptor. Processing by CASP1 induces conformational changes to generate critical receptor-binding sites. The mature form is then secreted and released in the extracellular milieu by passing through the gasdermin-D (GSDMD) pore. In contrast, cleavage by CASP3 inactivates IL18.

The protein localises to the cytoplasm. Its subcellular location is the secreted. In terms of biological role, pro-inflammatory cytokine primarily involved in epithelial barrier repair, polarized T-helper 1 (Th1) cell and natural killer (NK) cell immune responses. Upon binding to IL18R1 and IL18RAP, forms a signaling ternary complex which activates NF-kappa-B, triggering synthesis of inflammatory mediators. Synergizes with IL12/interleukin-12 to induce IFNG synthesis from T-helper 1 (Th1) cells and natural killer (NK) cells. Involved in transduction of inflammation downstream of pyroptosis: its mature form is specifically released in the extracellular milieu by passing through the gasdermin-D (GSDMD) pore. The sequence is that of Interleukin-18 from Mus musculus (Mouse).